A 166-amino-acid chain; its full sequence is Ribosome maturation factor RimM (166 aa).

The 73-residue stretch at 94–166 folds into the PRC barrel domain; the sequence is EDEFYITDLN…AILNYKRDEL (73 aa).

It belongs to the RimM family. In terms of assembly, binds ribosomal protein uS19.

The protein resides in the cytoplasm. In terms of biological role, an accessory protein needed during the final step in the assembly of 30S ribosomal subunit, possibly for assembly of the head region. Essential for efficient processing of 16S rRNA. May be needed both before and after RbfA during the maturation of 16S rRNA. It has affinity for free ribosomal 30S subunits but not for 70S ribosomes. This is Ribosome maturation factor RimM from Rickettsia bellii (strain RML369-C).